Consider the following 224-residue polypeptide: Protein LURP-one-related 1 (224 aa).

The interval 1-23 (MQQPYEYRYPQGTGPSAPPPPPK) is disordered.

This sequence belongs to the LOR family.

Functionally, might be related to the phospholipid scramblase and tubby-like superfamily of membrane tethered transcription factors. The polypeptide is Protein LURP-one-related 1 (Arabidopsis thaliana (Mouse-ear cress)).